A 266-amino-acid polypeptide reads, in one-letter code: Luciferase (266 aa).

The chain crosses the membrane as a helical span at residues 22–41 (GLAAACCALAVASTIAFPYI).

This sequence belongs to the fungal luciferase family.

Its subcellular location is the membrane. The catalysed reaction is 3-hydroxyhispidin + O2 = (E)-caffeoylpyruvate + hnu + CO2. The enzyme catalyses 3-hydroxyhispidin + O2 = 4-[(E)-2-(3,4-dihydroxyphenyl)ethenyl]-1,7-dihydroxy-2,3,5-trioxabicyclo[2.2.2]oct-7-en-6-one. Its function is as follows. Luciferase; part of the gene cluster that mediates the fungal bioluminescence cycle. Uses the fungal luciferin 3-hydroxyhispidin as a substrate to produce an endoperoxide as a high-energy intermediate with decomposition that yields oxyluciferin (also known as caffeoylpyruvate) and light emission. The fungal bioluminescence cycle begins with the hispidin synthetase that catalyzes the formation of hispidin which is further hydroxylated by the hispidin-3-hydroxylase, yielding the fungal luciferin 3-hydroxyhispidin. The luciferase then produces an endoperoxide as a high-energy intermediate with decomposition that yields oxyluciferin and light emission. Oxyluciferin can be recycled to caffeic acid by caffeoylpyruvate hydrolase. The protein is Luciferase of Armillaria gallica (Bulbous honey fungus).